The following is a 185-amino-acid chain: Elongation factor P (185 aa).

Belongs to the elongation factor P family.

It is found in the cytoplasm. It functions in the pathway protein biosynthesis; polypeptide chain elongation. In terms of biological role, involved in peptide bond synthesis. Stimulates efficient translation and peptide-bond synthesis on native or reconstituted 70S ribosomes in vitro. Probably functions indirectly by altering the affinity of the ribosome for aminoacyl-tRNA, thus increasing their reactivity as acceptors for peptidyl transferase. This is Elongation factor P from Lachnoclostridium phytofermentans (strain ATCC 700394 / DSM 18823 / ISDg) (Clostridium phytofermentans).